Consider the following 391-residue polypeptide: 3-ketoacyl-CoA thiolase (391 aa).

Cys95 acts as the Acyl-thioester intermediate in catalysis. Residues His347 and Cys377 each act as proton acceptor in the active site.

Belongs to the thiolase-like superfamily. Thiolase family. In terms of assembly, heterotetramer of two alpha chains (FadB) and two beta chains (FadA).

It localises to the cytoplasm. The enzyme catalyses an acyl-CoA + acetyl-CoA = a 3-oxoacyl-CoA + CoA. It participates in lipid metabolism; fatty acid beta-oxidation. Catalyzes the final step of fatty acid oxidation in which acetyl-CoA is released and the CoA ester of a fatty acid two carbons shorter is formed. The polypeptide is 3-ketoacyl-CoA thiolase (Pseudomonas syringae pv. tomato (strain ATCC BAA-871 / DC3000)).